The sequence spans 524 residues: Germ cell-less protein-like 1 (524 aa).

The disordered stretch occupies residues 1 to 37 (MGALSSRVLRPAGRTEQPEPTPGAGGAARRSDAGEDA). The short motif at 47–53 (GRKRKRS) is the Nuclear localization signal element. Residues 63–83 (DSETDDDEDEGDEQQRLLNTP) form a disordered region. Residue Ser-64 is modified to Phosphoserine. A compositionally biased stretch (acidic residues) spans 65-74 (ETDDDEDEGD). Thr-66 is modified (phosphothreonine). A Nuclear localization signal motif is present at residues 83 to 89 (PRRKKLK). The region spanning 106-176 (SDIKICALGE…LYRDDVLIKP (71 aa)) is the BTB domain.

As to quaternary structure, interacts with TMPO-Beta, TSG101 and TFDP2. Interacts with EMD. As to expression, ubiquitously expressed at low levels throughout development and in adult tissues.

Its subcellular location is the nucleus matrix. In terms of biological role, possible function in spermatogenesis. Enhances the degradation of MDM2 and increases the amount of p53 probably by modulating the nucleocytoplasmic transport. This chain is Germ cell-less protein-like 1 (Gmcl1), found in Mus musculus (Mouse).